Here is a 141-residue protein sequence, read N- to C-terminus: Large ribosomal subunit protein uL11 (141 aa).

Belongs to the universal ribosomal protein uL11 family. As to quaternary structure, part of the ribosomal stalk of the 50S ribosomal subunit. Interacts with L10 and the large rRNA to form the base of the stalk. L10 forms an elongated spine to which L12 dimers bind in a sequential fashion forming a multimeric L10(L12)X complex. In terms of processing, one or more lysine residues are methylated.

Functionally, forms part of the ribosomal stalk which helps the ribosome interact with GTP-bound translation factors. This is Large ribosomal subunit protein uL11 from Ruminiclostridium cellulolyticum (strain ATCC 35319 / DSM 5812 / JCM 6584 / H10) (Clostridium cellulolyticum).